A 392-amino-acid polypeptide reads, in one-letter code: Phosphoglycerate kinase (392 aa).

Substrate contacts are provided by residues 21-23, R36, 59-62, R113, and R146; these read DLN and HRGR. ATP-binding positions include K197, E314, and 340–343; that span reads GGDT.

This sequence belongs to the phosphoglycerate kinase family. In terms of assembly, monomer.

It localises to the cytoplasm. The catalysed reaction is (2R)-3-phosphoglycerate + ATP = (2R)-3-phospho-glyceroyl phosphate + ADP. It participates in carbohydrate degradation; glycolysis; pyruvate from D-glyceraldehyde 3-phosphate: step 2/5. The chain is Phosphoglycerate kinase from Vesicomyosocius okutanii subsp. Calyptogena okutanii (strain HA).